A 162-amino-acid chain; its full sequence is Transcriptional repressor NrdR (162 aa).

A zinc finger lies at 3–34; that stretch reads CPFCQFEGLKVTDSRDAMEMNAIRRRRECLNC. The region spanning 48–138 is the ATP-cone domain; it reads VQVQKRDGTY…VYKRFKDLGE (91 aa).

Belongs to the NrdR family. Zn(2+) is required as a cofactor.

In terms of biological role, negatively regulates transcription of bacterial ribonucleotide reductase nrd genes and operons by binding to NrdR-boxes. The chain is Transcriptional repressor NrdR from Protochlamydia amoebophila (strain UWE25).